The primary structure comprises 785 residues: SUN domain-containing protein 1 (785 aa).

The LMNA-binding stretch occupies residues 1–138 (MDFSRLHMYS…TRRPPVLDES (138 aa)). Residues 1–288 (MDFSRLHMYS…VFLLTRCLRN (288 aa)) are Nuclear-facing. Residues Ser48, Ser100, and Ser138 each carry the phosphoserine modification. Residue Lys195 forms a Glycyl lysine isopeptide (Lys-Gly) (interchain with G-Cter in SUMO2) linkage. An SYNE2-binding region spans residues 209 to 309 (SRVYSRDRNQ…FLLLAGLSLR (101 aa)). An EMD-binding region spans residues 223-309 (LLQILRRIGA…FLLLAGLSLR (87 aa)). The chain crosses the membrane as a helical span at residues 289–308 (ICKFLVLLIPLFLLLAGLSL). The Perinuclear space segment spans residues 309 to 785 (RGQGNFFSFL…RFRVHGEPVK (477 aa)). Phosphoserine occurs at positions 333 and 344. The stretch at 428-495 (HQEHEVRMSH…KSELSSWRHV (68 aa)) forms a coiled coil. Residues 574–785 (TSEAVVSAVS…RFRVHGEPVK (212 aa)) form a sufficient for interaction with SYNE1 and SYNE2 region. Residues 622–784 (GGSILSTRCS…YRFRVHGEPV (163 aa)) form the SUN domain.

In terms of assembly, core component of the LINC complex which is composed of inner nuclear membrane SUN domain-containing proteins coupled to outer nuclear membrane KASH domain-containing nesprins. SUN and KASH domain-containing proteins seem to bind each other promiscuously; however, differentially expression of LINC complex constituents is giving rise to specific assemblies. At least SUN1/2-containing core LINC complexes are proposed to be hexameric composed of three protomers of each KASH and SUN domain-containing protein. Interacts with KASH5 (via the last 22 amino acids); this interaction mediates KASH5 telomere localization by forming a SUN1:KASH5 LINC complex. May interact with SYNE3. Interacts with SYNE2 and SYNE1; probably forming respective LINC complexes. Interacts with A-type lamin with a strong preference for unprocessed A-type lamin compared with the mature protein. Interaction with lamins B1 and C is hardly detectable. Interacts with NAT10. Interacts with EMD and TSNAX. Associates with the nuclear pore complex (NPC). Interacts with CCDC79/TERB1; promoting the accumulation of the LINC complex complexes at the telomere-nuclear envelope attachment sites. Interacts (via KASH domain) with TMEM258. In terms of processing, the disulfide bond with KASH domain-containing nesprins is required for stability of the respective LINC complexes under tensile forces.

Its subcellular location is the nucleus inner membrane. As a component of the LINC (LInker of Nucleoskeleton and Cytoskeleton) complex involved in the connection between the nuclear lamina and the cytoskeleton. The nucleocytoplasmic interactions established by the LINC complex play an important role in the transmission of mechanical forces across the nuclear envelope and in nuclear movement and positioning. Required for interkinetic nuclear migration (INM) and essential for nucleokinesis and centrosome-nucleus coupling during radial neuronal migration in the cerebral cortex and during glial migration. Involved in telomere attachment to nuclear envelope in the prophase of meiosis implicating a SUN1/2:KASH5 LINC complex in which SUN1 and SUN2 seem to act at least partial redundantly. Required for gametogenesis and involved in selective gene expression of coding and non-coding RNAs needed for gametogenesis. Helps to define the distribution of nuclear pore complexes (NPCs). Required for efficient localization of SYNE4 in the nuclear envelope. May be involved in nuclear remodeling during sperm head formation in spermatogenesis. May play a role in DNA repair by suppressing non-homologous end joining repair to facilitate the repair of DNA cross-links. This Homo sapiens (Human) protein is SUN domain-containing protein 1.